The primary structure comprises 709 residues: Polyribonucleotide nucleotidyltransferase (709 aa).

Mg(2+) is bound by residues D489 and D495. One can recognise a KH domain in the interval 556 to 615; it reads PKIDMIKIDVDKIKVVIGKGGETIDKIIAETGVKIDIDEEGNVSIFSSDQAAIDRTKDII. The region spanning 625 to 693 is the S1 motif domain; the sequence is GEVYHAKVVR…DKGRVDASMK (69 aa).

Belongs to the polyribonucleotide nucleotidyltransferase family. The cofactor is Mg(2+).

The protein resides in the cytoplasm. The catalysed reaction is RNA(n+1) + phosphate = RNA(n) + a ribonucleoside 5'-diphosphate. Its function is as follows. Involved in mRNA degradation. Catalyzes the phosphorolysis of single-stranded polyribonucleotides processively in the 3'- to 5'-direction. The sequence is that of Polyribonucleotide nucleotidyltransferase from Streptococcus agalactiae serotype III (strain NEM316).